Consider the following 761-residue polypeptide: Neurotrypsin (761 aa).

A signal peptide spans 1–21 (MALARCVLAVILGVLSEVARA). Residues 26 to 88 (HSPLHRPHPS…PTISRRCGAG (63 aa)) form a disordered region. A compositionally biased stretch (pro residues) spans 54-63 (TPRFPLPPRA). The 73-residue stretch at 85-157 (CGAGEPWGNA…GKVDWGYCDC (73 aa)) folds into the Kringle domain. 17 cysteine pairs are disulfide-bonded: C85-C157, C101-C141, C130-C155, C191-C255, C204-C265, C235-C245, C298-C361, C311-C371, C341-C351, C411-C475, C424-C485, C455-C465, C505-C636, C547-C563, C651-C717, C680-C694, and C707-C736. N93 carries an N-linked (GlcNAc...) asparagine glycan. 3 SRCR domains span residues 166 to 267 (IRLV…SCAP), 273 to 373 (IRLS…TCYP), and 386 to 487 (IRLM…ICDY). The zymogen activation region stretch occupies residues 505-516 (CGLRLLHRRQKR). Residues 517–760 (IIGGNNSLRG…FVPWIKSVTS (244 aa)) enclose the Peptidase S1 domain. N521 is a glycosylation site (N-linked (GlcNAc...) asparagine). The Charge relay system role is filled by H562. N-linked (GlcNAc...) asparagine glycosylation occurs at N569. D612 (charge relay system) is an active-site residue. The active-site Charge relay system is the S711.

The protein belongs to the peptidase S1 family.

It localises to the secreted. Functionally, plays a role in neuronal plasticity and the proteolytic action may subserve structural reorganizations associated with learning and memory operations. The protein is Neurotrypsin (Prss12) of Rattus norvegicus (Rat).